A 237-amino-acid chain; its full sequence is ATP-dependent dethiobiotin synthetase BioD (237 aa).

12-17 is a binding site for ATP; sequence DAGKTL. Mg(2+) is bound at residue Thr16. The active site involves Lys37. A substrate-binding site is contributed by Ser41. Residues Asp54, 116 to 119, and 213 to 215 each bind ATP; these read EGAG and PRL. 2 residues coordinate Mg(2+): Asp54 and Glu116.

The protein belongs to the dethiobiotin synthetase family. Homodimer. Mg(2+) is required as a cofactor.

It is found in the cytoplasm. The catalysed reaction is (7R,8S)-7,8-diammoniononanoate + CO2 + ATP = (4R,5S)-dethiobiotin + ADP + phosphate + 3 H(+). It participates in cofactor biosynthesis; biotin biosynthesis; biotin from 7,8-diaminononanoate: step 1/2. Functionally, catalyzes a mechanistically unusual reaction, the ATP-dependent insertion of CO2 between the N7 and N8 nitrogen atoms of 7,8-diaminopelargonic acid (DAPA, also called 7,8-diammoniononanoate) to form a ureido ring. This is ATP-dependent dethiobiotin synthetase BioD from Chromohalobacter salexigens (strain ATCC BAA-138 / DSM 3043 / CIP 106854 / NCIMB 13768 / 1H11).